The chain runs to 231 residues: Small ribosomal subunit protein uS2 (231 aa).

Belongs to the universal ribosomal protein uS2 family.

The chain is Small ribosomal subunit protein uS2 from Blochmanniella floridana.